A 499-amino-acid chain; its full sequence is U4/U6 small nuclear ribonucleoprotein Prp31 (499 aa).

A disordered region spans residues 1 to 37 (MSLADELLADLEEAAEEEEGGSYGEEEEEPAIEDVQE). Residues 7–37 (LLADLEEAAEEEEGGSYGEEEEEPAIEDVQE) are compositionally biased toward acidic residues. 2 coiled-coil regions span residues 85–120 (EAAP…KYSK) and 181–215 (EEEL…MSFI). The Nop domain occupies 215-333 (IAPNLSIIIG…IERKFDKWQE (119 aa)). A disordered region spans residues 334-357 (PPPVKQVKPLPAPLDGQRKKRGGR). The Nuclear localization signal (NLS) signature appears at 351–364 (RKKRGGRRYRKMKE). 3 positions are modified to phosphoserine: serine 379, serine 395, and serine 432. At lysine 438 the chain carries N6-acetyllysine. Serine 439 is modified (phosphoserine). A Phosphothreonine modification is found at threonine 440. Serine 450 carries the phosphoserine modification. Residue threonine 455 is modified to Phosphothreonine. Glycyl lysine isopeptide (Lys-Gly) (interchain with G-Cter in SUMO2) cross-links involve residues lysine 471 and lysine 478.

It belongs to the PRP31 family. In terms of assembly, identified in the spliceosome B complex. Component of the U4/U6-U5 tri-snRNP complex composed of the U4, U6 and U5 snRNAs and at least PRPF3, PRPF4, PRPF6, PRPF8, PRPF31, SNRNP200, TXNL4A, SNRNP40, DDX23, CD2BP2, PPIH, SNU13, EFTUD2, SART1 and USP39. Interacts with a complex formed by SNU13 and U4 snRNA, but not with SNU13 or U4 snRNA alone. The complex formed by SNU13 and PRPF31 also binds U4atac snRNA, a characteristic component of specific, less abundant spliceosomal complexes. Interacts with PRPF6/U5 snRNP-associated 102 kDa protein. Component of some MLL1/MLL complex, at least composed of the core components KMT2A/MLL1, ASH2L, HCFC1/HCF1, WDR5 and RBBP5, as well as the facultative components BACC1, CHD8, E2F6, HSP70, INO80C, KANSL1, LAS1L, MAX, MCRS1, MGA, KAT8/MOF, PELP1, PHF20, PRP31, RING2, RUVB1/TIP49A, RUVB2/TIP49B, SENP3, TAF1, TAF4, TAF6, TAF7, TAF9 and TEX10. Interacts (via its NLS) with CTNNBL1. Interacts with USH1G. In terms of processing, phosphorylated by PRP4K during spliceosome assembly. In terms of tissue distribution, ubiquitously expressed.

Its subcellular location is the nucleus. It is found in the nucleus speckle. The protein localises to the cajal body. Its function is as follows. Involved in pre-mRNA splicing as component of the spliceosome. Required for the assembly of the U4/U5/U6 tri-snRNP complex, one of the building blocks of the spliceosome. This Homo sapiens (Human) protein is U4/U6 small nuclear ribonucleoprotein Prp31.